We begin with the raw amino-acid sequence, 74 residues long: Lantibiotic lichenicidin A1 (74 aa).

Residues 1 to 42 (MSKKEMILSWKNPMYRTESSYHPAGNILKELQEEEQHSIAGG) constitute a propeptide that is removed on maturation. Residue threonine 43 is modified to 2-oxobutanoic acid. The beta-methyllanthionine (Thr-Cys) cross-link spans 45 to 49 (TLSTC). A 2,3-didehydroalanine (Ser) modification is found at serine 47. Position 48 is a (Z)-2,3-didehydrobutyrine (threonine 48). A cross-link (lanthionine (Ser-Cys)) is located at residues 53–63 (SKPLGNNGYLC). 2 consecutive cross-links (beta-methyllanthionine (Thr-Cys)) follow at residues 64–69 (TVTKEC) and 66–73 (TKECMPSC).

In terms of processing, maturation of lantibiotics involves the enzymatic conversion of Thr, and Ser into dehydrated AA and the formation of thioether bonds with cysteine. This is followed by membrane translocation and cleavage of the modified precursor.

It is found in the secreted. The protein localises to the cell wall. Functionally, lanthionine-containing peptide antibiotic (lantibiotic) active on Gram-positive bacteria. The bactericidal activity of lantibiotics is based on depolarization of energized bacterial cytoplasmic membranes, initiated by the formation of aqueous transmembrane pores. When present individually, LchA1 exhibits activity towards L.lactis HP. When combined with LchA2, it displays activity towards a broad spectrum of non-pathogenic and pathogenic Gram-positive bacteria including strains of L.monocytogenes, methicillin-resistant S.aureus, S.pneumoniae and strains of vancomycin-resistant enterococci, but not towards E.faecium L4001 and BM4147-1. Combined LchA1 and LchA2 peptides also inhibit Bacillus sp. HIL-Y85/54728, L.lactis DPC3417 and B.halodurans C-125, which produce lantibiotics themselves. Inactivated by proteinase K and pronase E, but not by trypsin and chymotrypsin. This Bacillus licheniformis (strain ATCC 14580 / DSM 13 / JCM 2505 / CCUG 7422 / NBRC 12200 / NCIMB 9375 / NCTC 10341 / NRRL NRS-1264 / Gibson 46) protein is Lantibiotic lichenicidin A1.